We begin with the raw amino-acid sequence, 145 residues long: Large ribosomal subunit protein uL13 (145 aa).

The protein belongs to the universal ribosomal protein uL13 family. Part of the 50S ribosomal subunit.

In terms of biological role, this protein is one of the early assembly proteins of the 50S ribosomal subunit, although it is not seen to bind rRNA by itself. It is important during the early stages of 50S assembly. The polypeptide is Large ribosomal subunit protein uL13 (Listeria innocua serovar 6a (strain ATCC BAA-680 / CLIP 11262)).